A 480-amino-acid chain; its full sequence is Uridine 5'-monophosphate synthase (480 aa).

A2 carries the post-translational modification N-acetylalanine. The OPRTase stretch occupies residues 2–214 (AAVGAALGPL…VFVAANHNGS (213 aa)). Y37 is subject to Phosphotyrosine. The residue at position 214 (S214) is a Phosphoserine. The interval 215-220 (PLSIKE) is domain linker. The tract at residues 221 to 480 (APKELSFSAR…WEAYLSRLGV (260 aa)) is OMPdecase. S257 lines the orotidine 5'-phosphate pocket. UMP is bound by residues S257, D259, and 281 to 283 (KTH). Orotidine 5'-phosphate is bound by residues K281, K314, D317, T321, S372, 430–432 (QQY), and 450–451 (GR). Catalysis depends on for OMPdecase activity residues K314 and D317. UMP-binding positions include D317, T321, S372, 430–432 (QQY), and 450–451 (GR).

It in the N-terminal section; belongs to the purine/pyrimidine phosphoribosyltransferase family. In the C-terminal section; belongs to the OMP decarboxylase family. Homodimer; dimerization is required for enzymatic activity.

It catalyses the reaction orotidine 5'-phosphate + diphosphate = orotate + 5-phospho-alpha-D-ribose 1-diphosphate. The enzyme catalyses orotidine 5'-phosphate + H(+) = UMP + CO2. It functions in the pathway pyrimidine metabolism; UMP biosynthesis via de novo pathway; UMP from orotate: step 1/2. The protein operates within pyrimidine metabolism; UMP biosynthesis via de novo pathway; UMP from orotate: step 2/2. Functionally, bifunctional enzyme catalyzing the last two steps of de novo pyrimidine biosynthesis, orotate phosphoribosyltransferase (OPRT), which converts orotate to orotidine-5'-monophosphate (OMP), and orotidine-5'-monophosphate decarboxylase (ODC), the terminal enzymatic reaction that decarboxylates OMP to uridine monophosphate (UMP). This Pongo abelii (Sumatran orangutan) protein is Uridine 5'-monophosphate synthase (UMPS).